Reading from the N-terminus, the 405-residue chain is Amino acid transporter AVT1I (405 aa).

11 helical membrane passes run 22–42 (CFNA…YSLA), 46–66 (WLSL…SLLI), 93–113 (IIVS…FLIL), 140–160 (FMAT…LSVL), 169–189 (LATT…GIGF), 201–221 (IPTA…LPTL), 234–254 (VLLI…VLGY), 278–298 (VAIY…ITPT), 318–338 (LLIS…LPFF), 343–363 (SLVG…LCYL), and 377–397 (IMLF…TYIA).

This sequence belongs to the amino acid/polyamine transporter 2 family. Amino acid/auxin permease (AAAP) (TC 2.A.18.5) subfamily.

Its subcellular location is the membrane. In Arabidopsis thaliana (Mouse-ear cress), this protein is Amino acid transporter AVT1I.